The chain runs to 258 residues: Regulatory protein RecX (258 aa).

Belongs to the RecX family.

It is found in the cytoplasm. In terms of biological role, modulates RecA activity. The chain is Regulatory protein RecX from Streptococcus pneumoniae (strain 70585).